The following is a 366-amino-acid chain: UDP-N-acetylglucosamine--N-acetylmuramyl-(pentapeptide) pyrophosphoryl-undecaprenol N-acetylglucosamine transferase (366 aa).

UDP-N-acetyl-alpha-D-glucosamine-binding positions include 10 to 12, Asn124, Ser195, and Gln295; that span reads TGG.

It belongs to the glycosyltransferase 28 family. MurG subfamily.

Its subcellular location is the cell membrane. The catalysed reaction is di-trans,octa-cis-undecaprenyl diphospho-N-acetyl-alpha-D-muramoyl-L-alanyl-D-glutamyl-meso-2,6-diaminopimeloyl-D-alanyl-D-alanine + UDP-N-acetyl-alpha-D-glucosamine = di-trans,octa-cis-undecaprenyl diphospho-[N-acetyl-alpha-D-glucosaminyl-(1-&gt;4)]-N-acetyl-alpha-D-muramoyl-L-alanyl-D-glutamyl-meso-2,6-diaminopimeloyl-D-alanyl-D-alanine + UDP + H(+). It participates in cell wall biogenesis; peptidoglycan biosynthesis. Functionally, cell wall formation. Catalyzes the transfer of a GlcNAc subunit on undecaprenyl-pyrophosphoryl-MurNAc-pentapeptide (lipid intermediate I) to form undecaprenyl-pyrophosphoryl-MurNAc-(pentapeptide)GlcNAc (lipid intermediate II). The protein is UDP-N-acetylglucosamine--N-acetylmuramyl-(pentapeptide) pyrophosphoryl-undecaprenol N-acetylglucosamine transferase of Bacillus licheniformis (strain ATCC 14580 / DSM 13 / JCM 2505 / CCUG 7422 / NBRC 12200 / NCIMB 9375 / NCTC 10341 / NRRL NRS-1264 / Gibson 46).